The sequence spans 641 residues: Kelch-like protein 22 (641 aa).

The disordered stretch occupies residues 1–25 (MAEDLETMKPSQAPQQPSLPQGSSK). Positions 10–24 (PSQAPQQPSLPQGSS) are enriched in low complexity. Residues 50–117 (FDVVLKVEGK…IYTSDLALSV (68 aa)) enclose the BTB domain. Kelch repeat units lie at residues 299–349 (CVVG…VLNN), 350–399 (FVYL…VLGD), 400–446 (FLYA…ALDG), 448–493 (MYVA…ALQE), 494–544 (KIYL…VLAK), and 545–593 (KIFV…VLTL).

In terms of assembly, component of the BCR(KLHL22) E3 ubiquitin ligase complex, at least composed of cul3, klhl22 and rbx1.

It is found in the cytoplasm. It localises to the cytosol. The protein localises to the cytoskeleton. The protein resides in the microtubule organizing center. Its subcellular location is the centrosome. It is found in the spindle. It localises to the nucleus. The protein localises to the lysosome. The protein operates within protein modification; protein ubiquitination. Substrate-specific adapter of a BCR (BTB-CUL3-RBX1) E3 ubiquitin ligase complex. The BCR(KLHL22) ubiquitin ligase complex could mediate the monoubiquitination of PLK1 and regulate its activity in spindle assembly checkpoint (SAC) and chromosome segregation. The BCR(KLHL22) ubiquitin ligase complex may also be responsible for the ubiquitin-dependent proteasomal degradation of DEPDC5 and the activation of the TORC1 pathway. This Xenopus tropicalis (Western clawed frog) protein is Kelch-like protein 22 (klhl22).